A 255-amino-acid polypeptide reads, in one-letter code: Flap endonuclease Xni (255 aa).

Position 105 (Asp105) interacts with Mg(2+). The region spanning 162 to 253 is the 5'-3' exonuclease domain; it reads EHSQFIDYLA…NLSQFRLPNP (92 aa). K(+) contacts are provided by Leu172, Ala173, Pro181, Val183, and Ile186. The segment at 185 to 190 is interaction with DNA; the sequence is GIGPKS.

This sequence belongs to the Xni family. Mg(2+) serves as cofactor. Requires K(+) as cofactor.

Its function is as follows. Has flap endonuclease activity. During DNA replication, flap endonucleases cleave the 5'-overhanging flap structure that is generated by displacement synthesis when DNA polymerase encounters the 5'-end of a downstream Okazaki fragment. The sequence is that of Flap endonuclease Xni from Shewanella sediminis (strain HAW-EB3).